Here is a 53-residue protein sequence, read N- to C-terminus: uncharacterized protein (53 aa).

Residues 26 to 46 (CYLLFCFLECFLNLFKKCGVF) form a helical membrane-spanning segment.

Belongs to the plectrovirus ORF11 family.

Its subcellular location is the host membrane. This is an uncharacterized protein from Spiroplasma virus SpV1-R8A2 B (SpV1).